A 185-amino-acid chain; its full sequence is Ribosome-recycling factor (185 aa).

Residues 131 to 155 (DRKNANDKIKKSEKDKEITADESKS) show a composition bias toward basic and acidic residues. The tract at residues 131–156 (DRKNANDKIKKSEKDKEITADESKSA) is disordered.

This sequence belongs to the RRF family.

The protein resides in the cytoplasm. Functionally, responsible for the release of ribosomes from messenger RNA at the termination of protein biosynthesis. May increase the efficiency of translation by recycling ribosomes from one round of translation to another. The chain is Ribosome-recycling factor from Sulfurimonas denitrificans (strain ATCC 33889 / DSM 1251) (Thiomicrospira denitrificans (strain ATCC 33889 / DSM 1251)).